The following is a 90-amino-acid chain: Small ribosomal subunit protein uS17m (90 aa).

The protein belongs to the universal ribosomal protein uS17 family. In terms of assembly, component of the mitochondrial small ribosomal subunit (mt-SSU). Mature yeast 74S mitochondrial ribosomes consist of a small (37S) and a large (54S) subunit. The 37S small subunit contains a 15S ribosomal RNA (15S mt-rRNA) and at least 32 different proteins. The 54S large subunit contains a 21S rRNA (21S mt-rRNA) and at least 45 different proteins.

It is found in the mitochondrion. Component of the mitochondrial ribosome (mitoribosome), a dedicated translation machinery responsible for the synthesis of mitochondrial genome-encoded proteins, including at least some of the essential transmembrane subunits of the mitochondrial respiratory chain. The mitoribosomes are attached to the mitochondrial inner membrane and translation products are cotranslationally integrated into the membrane. uS17m may have a meiosis-specific role as it accumulates during the middle stage of sporulation. The protein is Small ribosomal subunit protein uS17m of Schizosaccharomyces pombe (strain 972 / ATCC 24843) (Fission yeast).